We begin with the raw amino-acid sequence, 684 residues long: MDEMIPKPLISNDNEMMHGHGYTTMVHGNNEILNGNELAVHAEVIPSASTRGQKRKSAIWEHFTLVDVSDGCKRASCIHCNQSLAYSSGSKNSGTSHLTRHIAEWCRVLKDRQKSRRYTTYNSSNENASFDQERSCLRLAKMIILNDYPLHIVQQPAFLSFVDSVQPNFKMVDIGTIETEVYAIYLKEKDHLQQALANIPGRISLTVGSLTTNQSIRYISLAAQFIDSEWRLHRRVLKVMMAPWPQSENAVSRAIIKCLSDWNMQDKLFTITLEHDCSSHDIYSANLRNHLSGDNILMLKGQTFAVRCYANILNAVAHGVLASVHNVIYLIRESIKFIKADDAHENKFAEIAVELKITSNNSLCLDVTSEWNTTYLMLLAALDYRQVFTLLESYYDNYGTAPSTEDWKKVEAACGFLKLLYAFTLNIMSAEGNHQTANMFFHDAWVLQLELQNGMAHGDDVIRGIVIGIHEKFDKYWKDCNVVLAIAVAMDPRFKMKMVEFAYSKIYGPTDAAKYVKLVDDAILDLYKEYAAQPELLPLSPIYVDQVPADGLPFIETGGAPATASPSTAAAGAGLVDFDMYLSEVTTMGQPFKHELELYLEEALTQRTPDFDVLKWWQDNTLKYPTLSRMARDVLAIPMSTVGVGSSVFLPDNGSRSLDDYRSSLRPELVEALLCAKDWLQYSP.

Residues 54 to 113 (KRKSAIWEHFTLVDVSDGCKRASCIHCNQSLAYSSGSKNSGTSHLTRHIAEWCRVLKDRQ) form a BED-type zinc finger. Zn(2+) is bound by residues Cys-77, Cys-80, His-101, and Cys-106. Residues 595–680 (ELELYLEEAL…EALLCAKDWL (86 aa)) are HATC (Hobo-Ac-Tam3) domain.

As to quaternary structure, homodimer.

The protein resides in the nucleus. Functionally, transposase-like protein that is essential for plant growth and development. May regulate global gene expression by recruiting other cellular factors. The sequence is that of Zinc finger BED domain-containing protein RICESLEEPER 4 from Oryza sativa subsp. japonica (Rice).